Consider the following 336-residue polypeptide: GTPase Obg (336 aa).

Positions methionine 1–methionine 159 constitute an Obg domain. Positions glycine 120–proline 143 are disordered. Residues histidine 129–proline 138 are compositionally biased toward polar residues. In terms of domain architecture, OBG-type G spans alanine 160–serine 323. GTP-binding positions include glycine 166–serine 173, phenylalanine 191–valine 195, aspartate 213–glycine 216, threonine 280–aspartate 283, and serine 304–valine 306. Mg(2+) is bound by residues serine 173 and threonine 193.

It belongs to the TRAFAC class OBG-HflX-like GTPase superfamily. OBG GTPase family. As to quaternary structure, monomer. Mg(2+) is required as a cofactor.

The protein resides in the cytoplasm. In terms of biological role, an essential GTPase which binds GTP, GDP and possibly (p)ppGpp with moderate affinity, with high nucleotide exchange rates and a fairly low GTP hydrolysis rate. Plays a role in control of the cell cycle, stress response, ribosome biogenesis and in those bacteria that undergo differentiation, in morphogenesis control. This Chlorobium phaeovibrioides (strain DSM 265 / 1930) (Prosthecochloris vibrioformis (strain DSM 265)) protein is GTPase Obg.